A 655-amino-acid chain; its full sequence is Fidgetin-like protein 1 (655 aa).

The tract at residues 289 to 313 is disordered; the sequence is QQKKHSNQPQRNPGPLYGGGKKSLG. Residues Ala385 and 425–430 each bind ATP; that span reads GTGKTL.

Belongs to the AAA ATPase family. In terms of assembly, hexamer. Mg(2+) serves as cofactor.

The protein localises to the nucleus. It localises to the cytoplasm. It is found in the perinuclear region. The catalysed reaction is ATP + H2O = ADP + phosphate + H(+). Functionally, may be involved in DNA double-strand break (DBS) repair via homologous recombination (HR). May regulate osteoblast proliferation and differentiation. This chain is Fidgetin-like protein 1 (fignl1), found in Xenopus laevis (African clawed frog).